Here is a 60-residue protein sequence, read N- to C-terminus: Small ribosomal subunit protein uS10 (60 aa).

It belongs to the universal ribosomal protein uS10 family.

The sequence is that of Small ribosomal subunit protein uS10 (RPS20) from Zea mays (Maize).